Reading from the N-terminus, the 427-residue chain is MSWFDTTLSRLKGLFSRPVTRSTTGLDVPLDAHGRPQDVVTETVSTSGPLKPGHLRQVRRDARLLPKGVRRYTPGRKKWMEAAEARRLFSATLRTRNRNLRDLLPDEAQLARYGLPVWRTEEDVAAALGVSVGVLRHYSIHRPRERVRHYVTFAVPKRSGGVRLLHAPKRRLKALQRRMLALLVSKLPVSPQAHGFVPGRSIKTGAAPHVGRRVVLKLDLKDFFPSVTFARVRGLLIALGYGYPVAATLAVLMTESERQPVELEGILFHVPVGPRVCVQGAPTSPALCNAVLLRLDRRLAGLARRYGYTYTRYADDLTFSGDDVTALERVRALAARYVQEEGFEVNREKTRVQRRGGAQRVTGVTVNTTLGLSREERPRLRAMLHQEARSEDVEAHRAHLDGLLAYVKMLNPEQAERLARRRKPRGT.

The Reverse transcriptase domain occupies 136–366 (RHYSIHRPRE…GAQRVTGVTV (231 aa)). Asp-219, Asp-315, and Asp-316 together coordinate Mg(2+).

This sequence belongs to the bacterial reverse transcriptase family.

It catalyses the reaction DNA(n) + a 2'-deoxyribonucleoside 5'-triphosphate = DNA(n+1) + diphosphate. In terms of biological role, reverse transcriptase (RT) responsible for synthesis of msDNA-Mx65 (a branched molecule with RNA linked by a 2',5'-phosphodiester bond to ssDNA). The retron transcript serves as primer (from a conserved internal G residue) and template for the reaction, and codes for the RT. The retron is involved in antiviral defense. The polypeptide is Retron Mx65 reverse transcriptase (Myxococcus xanthus).